The primary structure comprises 655 residues: MSPPSHFDFIEARDKFTVATKNAVDTRNCKPLTTAFSHLPGNETEKKATLDQALRGVLEEQIVNQKVNVDDFLSLIYISIDGVTEGICSATTPFLLLGDVLDCLPLDQCDKIFSFVEENVSTWKSNTFYSAGKNYLLRMCNDLLRRLSKSQNTVFCGRIQLFLARLFPLSEKSGLNLQSQFNLDNITVFNKNEQDSTLGQQHTEVKEEGMDVEEGEMGDEDAPAPSSIPIDYNLYRKFWTLQDYFRNPVQCYDKFSWMTFIKYSDEALAVFKSFKLDDMQASKKKLEEMRTSSGDHVYFAKFLTSEKLMDLQLSDSNFRRHILLQYLILFQYLKGQVKFKSSSCVLNDDQSLWIEDTTKLVYQLLKEIPPDGDKFGSMVEHILNTEENWNSWKNEGCPSFVKERPAETKPIRPSRKRQAPEDFLGKGPDRKILMGNDELTRLWNLNPDNMEACKSENREFMPSLEDFFEEAIEQADPANMVEDEYKVVRNSNYGWRALRLLSRRSPHFFQPTNQQFKSLADYLENMVIKLAKELPKDIPSEEIKTGEEDDDENGDNLLKDSNDSPSIQSKAVTNSQMDEIAAKLGSQWKTLADHLEMSDKEIRVIESDSEDVDLQAKMLLVAWQDREGSQATMESLVTALNAAGFNNIADNLSET.

Disordered regions lie at residues 403–427 and 539–574; these read ERPA…LGKG and PSEE…AVTN. Residues 415–431 carry the Nuclear localization signal motif; it reads RKRQAPEDFLGKGPDRK. Positions 418–427 are enriched in basic and acidic residues; that stretch reads QAPEDFLGKG. The span at 563-574 shows a compositional bias: polar residues; sequence DSPSIQSKAVTN. Residues 573 to 655 form the Death domain; sequence TNSQMDEIAA…NNIADNLSET (83 aa).

Component of the THO complex. As to expression, expressed in the developing neuromast.

The protein localises to the nucleus. Its subcellular location is the nucleoplasm. The protein resides in the nucleus matrix. It is found in the cytoplasm. It localises to the cytosol. Component of the THO subcomplex of the TREX complex which is thought to couple mRNA transcription, processing and nuclear export, and which specifically associates with spliced mRNA and not with unspliced pre-mRNA. Required for efficient export of polyadenylated RNA. The THOC1-THOC2-THOC3 core complex alone is sufficient to bind export factor NXF1-NXT1 and promote ATPase activity of DDX39B. TREX is recruited to spliced mRNAs by a transcription-independent mechanism, binds to mRNA upstream of the exon-junction complex (EJC) and is recruited in a splicing- and cap-dependent manner to a region near the 5' end of the mRNA where it functions in mRNA export to the cytoplasm via the TAP/NXF1 pathway. Regulates transcriptional elongation of a subset of genes. Involved in genome stability by preventing co-transcriptional R-loop formation. May play a role in hair cell formation, hence may be involved in hearing. Its function is as follows. Participates in an apoptotic pathway which is characterized by activation of caspase-6, increases in the expression of BAK1 and BCL2L1 and activation of NF-kappa-B. This pathway does not require p53/TP53, nor does the presence of p53/TP53 affect the efficiency of cell killing. Activates a G2/M cell cycle checkpoint prior to the onset of apoptosis. Apoptosis is inhibited by association with RB1. Essential for early embryonic development. Required for normal gene expression during postnatal testis development. This chain is THO complex subunit 1 (thoc1), found in Danio rerio (Zebrafish).